The primary structure comprises 288 residues: 3'-5' exonuclease (288 aa).

Residues 30-67 (RSSSSSSSAAPTVQATTSVHGHEEDPNQIPNNIRRQLP) are disordered. Polar residues-rich tracts occupy residues 38 to 48 (AAPTVQATTSV) and 57 to 67 (QIPNNIRRQLP). A 3'-5' exonuclease domain is found at 129–279 (FVGLDIEWRP…ASWHLYKVLK (151 aa)).

Interacts with KU70 and KU80. Interacts with RECQL2. Mg(2+) is required as a cofactor. The cofactor is Mn(2+). As to expression, expressed ubiquitously.

The protein resides in the nucleus. Its activity is regulated as follows. Activated upon interaction with the KU heterodimer. Not stimulated by ATP. In terms of biological role, exonuclease that digests recessed strands of DNA duplexes in the 3' to 5' direction but hardly single-stranded DNA or blunt-ended duplexes. Also able to digest 3'-protruding strands and 3'-recessed strand termini of duplexes containing mismatched bases. In Arabidopsis thaliana (Mouse-ear cress), this protein is 3'-5' exonuclease (WEX).